The primary structure comprises 102 residues: Protein RnfH (102 aa).

The protein belongs to the UPF0125 (RnfH) family.

This chain is Protein RnfH, found in Pseudomonas entomophila (strain L48).